The following is a 468-amino-acid chain: uncharacterized protein (468 aa).

Residues 3–61 (TFANGMTLDVTVDALAPGGKAVCRHEGRVIFVDRGLPGQQLHVRLTTVRKRFAEAECLA) form the TRAM domain. [4Fe-4S] cluster is bound by residues Cys-74, Cys-80, Cys-83, and Cys-162. Gln-288, Tyr-317, Glu-338, and Asp-389 together coordinate S-adenosyl-L-methionine. Catalysis depends on Cys-416, which acts as the Nucleophile.

This sequence belongs to the class I-like SAM-binding methyltransferase superfamily. RNA M5U methyltransferase family.

This is an uncharacterized protein from Nitratidesulfovibrio vulgaris (strain ATCC 29579 / DSM 644 / CCUG 34227 / NCIMB 8303 / VKM B-1760 / Hildenborough) (Desulfovibrio vulgaris).